A 417-amino-acid polypeptide reads, in one-letter code: NADH-quinone oxidoreductase subunit D (417 aa).

This sequence belongs to the complex I 49 kDa subunit family. NDH-1 is composed of 14 different subunits. Subunits NuoB, C, D, E, F, and G constitute the peripheral sector of the complex.

It localises to the cell membrane. The enzyme catalyses a quinone + NADH + 5 H(+)(in) = a quinol + NAD(+) + 4 H(+)(out). In terms of biological role, NDH-1 shuttles electrons from NADH, via FMN and iron-sulfur (Fe-S) centers, to quinones in the respiratory chain. The immediate electron acceptor for the enzyme in this species is believed to be ubiquinone. Couples the redox reaction to proton translocation (for every two electrons transferred, four hydrogen ions are translocated across the cytoplasmic membrane), and thus conserves the redox energy in a proton gradient. The chain is NADH-quinone oxidoreductase subunit D from Polynucleobacter asymbioticus (strain DSM 18221 / CIP 109841 / QLW-P1DMWA-1) (Polynucleobacter necessarius subsp. asymbioticus).